The primary structure comprises 185 residues: Threonylcarbamoyl-AMP synthase (185 aa).

The region spanning M1–G185 is the YrdC-like domain.

This sequence belongs to the SUA5 family. TsaC subfamily.

It is found in the cytoplasm. It carries out the reaction L-threonine + hydrogencarbonate + ATP = L-threonylcarbamoyladenylate + diphosphate + H2O. Its function is as follows. Required for the formation of a threonylcarbamoyl group on adenosine at position 37 (t(6)A37) in tRNAs that read codons beginning with adenine. Catalyzes the conversion of L-threonine, HCO(3)(-)/CO(2) and ATP to give threonylcarbamoyl-AMP (TC-AMP) as the acyladenylate intermediate, with the release of diphosphate. This is Threonylcarbamoyl-AMP synthase from Aliivibrio fischeri (strain ATCC 700601 / ES114) (Vibrio fischeri).